We begin with the raw amino-acid sequence, 490 residues long: Adenylosuccinate synthetase 1, chloroplastic (490 aa).

The transit peptide at 1–47 (MSLSTLSHPAAAAAAATGSGKSHFRTAPAAQSVRFPKARPPVPAAVS) directs the protein to the chloroplast. A disordered region spans residues 14–36 (AAATGSGKSHFRTAPAAQSVRFP). Residues 77–83 (GDEGKGK) and 105–107 (GHT) each bind GTP. Residue Asp-78 is the Proton acceptor of the active site. The Mg(2+) site is built by Asp-78 and Gly-105. IMP contacts are provided by residues 78-81 (DEGK), 103-106 (NAGH), Thr-195, Arg-209, Gln-289, Thr-304, and Arg-368. His-106 serves as the catalytic Proton donor. A substrate-binding site is contributed by 364-370 (TTTGRPR). GTP is bound by residues Arg-370, 396–398 (KLD), and 479–481 (GVG).

This sequence belongs to the adenylosuccinate synthetase family. As to quaternary structure, homodimer. The cofactor is Mg(2+).

It is found in the plastid. It localises to the chloroplast. It carries out the reaction IMP + L-aspartate + GTP = N(6)-(1,2-dicarboxyethyl)-AMP + GDP + phosphate + 2 H(+). The protein operates within purine metabolism; AMP biosynthesis via de novo pathway; AMP from IMP: step 1/2. Its function is as follows. Plays an important role in the de novo pathway and in the salvage pathway of purine nucleotide biosynthesis. Catalyzes the first committed step in the biosynthesis of AMP from IMP. In Sorghum bicolor (Sorghum), this protein is Adenylosuccinate synthetase 1, chloroplastic.